Reading from the N-terminus, the 114-residue chain is Large ribosomal subunit protein uL22 (114 aa).

The protein belongs to the universal ribosomal protein uL22 family. In terms of assembly, part of the 50S ribosomal subunit.

Functionally, this protein binds specifically to 23S rRNA; its binding is stimulated by other ribosomal proteins, e.g. L4, L17, and L20. It is important during the early stages of 50S assembly. It makes multiple contacts with different domains of the 23S rRNA in the assembled 50S subunit and ribosome. The globular domain of the protein is located near the polypeptide exit tunnel on the outside of the subunit, while an extended beta-hairpin is found that lines the wall of the exit tunnel in the center of the 70S ribosome. This Aeromonas salmonicida (strain A449) protein is Large ribosomal subunit protein uL22.